The following is a 910-amino-acid chain: Disease resistance protein RPH8A (910 aa).

Residues 15–57 adopt a coiled-coil conformation; it reads DLLSRESERLQGIDEQLDGLKRQLRSLQSLLKDADAKKHGSDR. Residues 146–459 form the NB-ARC domain; sequence RQRVQREIRQ…AEGIYDGSTI (314 aa). An ATP-binding site is contributed by 192-199; sequence GMGGIGKT.

The protein belongs to the disease resistance NB-LRR family. RPP8/HRT subfamily.

Its function is as follows. Disease resistance protein. Resistance proteins guard the plant against pathogens that contain an appropriate avirulence protein via an indirect interaction with this avirulence protein. That triggers a defense system including the hypersensitive response, which restricts the pathogen growth. In contrast to RPP8, it does not specifically recognize the Emco5 avirulence protein from Hyaloperonospora parasitica. In Arabidopsis thaliana (Mouse-ear cress), this protein is Disease resistance protein RPH8A (RPH8A).